Reading from the N-terminus, the 433-residue chain is Zinc carboxypeptidase A 1 (433 aa).

The N-terminal stretch at 1 to 28 (MVRLNSAAGSRWWAPAMAILAVALSVEA) is a signal peptide. Residues 130-423 (DYHTLEEIHA…DSLITLLEES (294 aa)) enclose the Peptidase M14 domain. Residues histidine 187 and glutamate 190 each coordinate Zn(2+). Cysteine 253 and cysteine 276 are joined by a disulfide. Histidine 312 is a Zn(2+) binding site. Residue glutamate 387 is the Proton donor/acceptor of the active site.

The protein belongs to the peptidase M14 family. Zn(2+) is required as a cofactor. Expressed in the posterior midgut in pupae and female adults.

It localises to the secreted. Functionally, involved in the digestion of the blood meal. In Anopheles gambiae (African malaria mosquito), this protein is Zinc carboxypeptidase A 1.